The sequence spans 128 residues: Large ribosomal subunit protein bL12 (128 aa).

It belongs to the bacterial ribosomal protein bL12 family. Homodimer. Part of the ribosomal stalk of the 50S ribosomal subunit. Forms a multimeric L10(L12)X complex, where L10 forms an elongated spine to which 2 to 4 L12 dimers bind in a sequential fashion. Binds GTP-bound translation factors.

Its function is as follows. Forms part of the ribosomal stalk which helps the ribosome interact with GTP-bound translation factors. Is thus essential for accurate translation. The sequence is that of Large ribosomal subunit protein bL12 from Corynebacterium efficiens (strain DSM 44549 / YS-314 / AJ 12310 / JCM 11189 / NBRC 100395).